The following is a 258-amino-acid chain: Tryptophan synthase alpha chain (258 aa).

Catalysis depends on proton acceptor residues Glu47 and Asp58.

Belongs to the TrpA family. Tetramer of two alpha and two beta chains.

It catalyses the reaction (1S,2R)-1-C-(indol-3-yl)glycerol 3-phosphate + L-serine = D-glyceraldehyde 3-phosphate + L-tryptophan + H2O. It functions in the pathway amino-acid biosynthesis; L-tryptophan biosynthesis; L-tryptophan from chorismate: step 5/5. Functionally, the alpha subunit is responsible for the aldol cleavage of indoleglycerol phosphate to indole and glyceraldehyde 3-phosphate. The protein is Tryptophan synthase alpha chain of Bacillus mycoides (strain KBAB4) (Bacillus weihenstephanensis).